The chain runs to 142 residues: Large ribosomal subunit protein uL13 (142 aa).

This sequence belongs to the universal ribosomal protein uL13 family. In terms of assembly, part of the 50S ribosomal subunit.

This protein is one of the early assembly proteins of the 50S ribosomal subunit, although it is not seen to bind rRNA by itself. It is important during the early stages of 50S assembly. This Erwinia tasmaniensis (strain DSM 17950 / CFBP 7177 / CIP 109463 / NCPPB 4357 / Et1/99) protein is Large ribosomal subunit protein uL13.